Here is a 461-residue protein sequence, read N- to C-terminus: Cysteine--tRNA ligase (461 aa).

Cys30 provides a ligand contact to Zn(2+). The 'HIGH' region motif lies at 32–42 (VTVYDLCHIGH). Residues Cys211, His236, and Glu240 each coordinate Zn(2+). The 'KMSKS' region motif lies at 268–272 (KMSKS). Lys271 provides a ligand contact to ATP.

It belongs to the class-I aminoacyl-tRNA synthetase family. In terms of assembly, monomer. Zn(2+) is required as a cofactor.

The protein localises to the cytoplasm. It catalyses the reaction tRNA(Cys) + L-cysteine + ATP = L-cysteinyl-tRNA(Cys) + AMP + diphosphate. The chain is Cysteine--tRNA ligase from Shewanella sp. (strain MR-7).